A 626-amino-acid polypeptide reads, in one-letter code: Phosphomethylpyrimidine synthase (626 aa).

The tract at residues 1 to 22 (MTKQEKAINLSESAQVDQQSVQ) is disordered. Over residues 10-22 (LSESAQVDQQSVQ) the composition is skewed to polar residues. Substrate-binding positions include asparagine 232, methionine 261, tyrosine 290, histidine 326, 346–348 (SRG), 387–390 (DGLR), and glutamate 426. Histidine 430 contributes to the Zn(2+) binding site. Tyrosine 453 contacts substrate. Histidine 494 contacts Zn(2+). Residues cysteine 574, cysteine 577, and cysteine 582 each coordinate [4Fe-4S] cluster.

Belongs to the ThiC family. In terms of assembly, homodimer. [4Fe-4S] cluster serves as cofactor.

The catalysed reaction is 5-amino-1-(5-phospho-beta-D-ribosyl)imidazole + S-adenosyl-L-methionine = 4-amino-2-methyl-5-(phosphooxymethyl)pyrimidine + CO + 5'-deoxyadenosine + formate + L-methionine + 3 H(+). The protein operates within cofactor biosynthesis; thiamine diphosphate biosynthesis. Catalyzes the synthesis of the hydroxymethylpyrimidine phosphate (HMP-P) moiety of thiamine from aminoimidazole ribotide (AIR) in a radical S-adenosyl-L-methionine (SAM)-dependent reaction. In Pseudomonas putida (strain ATCC 47054 / DSM 6125 / CFBP 8728 / NCIMB 11950 / KT2440), this protein is Phosphomethylpyrimidine synthase.